A 290-amino-acid polypeptide reads, in one-letter code: tRNA (adenine(58)-N(1))-methyltransferase catalytic subunit TRMT61A (290 aa).

Residue serine 2 is modified to N-acetylserine. Substrate regions lie at residues 20 to 22 (LGH), 35 to 42 (QTQTRHGV), 64 to 65 (GW), 85 to 89 (QILYS), and 110 to 117 (SGTGSGSV). S-adenosyl-L-methionine contacts are provided by residues leucine 87, 114–116 (SGS), glutamate 135, arginine 140, 163–164 (DV), and aspartate 181. Substrate regions lie at residues 180 to 183 (LDIP) and 205 to 212 (SFSPCIEQ). At serine 264 the chain carries Phosphoserine. Threonine 279 contacts substrate.

It belongs to the class I-like SAM-binding methyltransferase superfamily. TRM61 family. Heterotetramer; composed of two copies of TRMT6 and two copies of TRMT61A.

The protein resides in the nucleus. It catalyses the reaction adenosine(58) in tRNA + S-adenosyl-L-methionine = N(1)-methyladenosine(58) in tRNA + S-adenosyl-L-homocysteine + H(+). The catalysed reaction is an adenosine in mRNA + S-adenosyl-L-methionine = an N(1)-methyladenosine in mRNA + S-adenosyl-L-homocysteine + H(+). Its function is as follows. Catalytic subunit of tRNA (adenine-N(1)-)-methyltransferase, which catalyzes the formation of N(1)-methyladenine at position 58 (m1A58) in initiator methionyl-tRNA. Catalytic subunit of mRNA N(1)-methyltransferase complex, which mediates methylation of adenosine residues at the N(1) position of a small subset of mRNAs: N(1) methylation takes place in tRNA T-loop-like structures of mRNAs and is only present at low stoichiometries. The sequence is that of tRNA (adenine(58)-N(1))-methyltransferase catalytic subunit TRMT61A (Trmt61a) from Mus musculus (Mouse).